Consider the following 284-residue polypeptide: Pseudopaline exporter CntI (284 aa).

A run of 10 helical transmembrane segments spans residues 2 to 22 (VLDLLKSGVLLAVLASFTFSV), 34 to 54 (LPAAEIVFFRSAIGTLLIYLL), 74 to 94 (GVMGALYLVCYFYAIAHIPLA), 96 to 116 (ASILAHMSPFFVILFSALFLG), 122 to 142 (AVYWLLLVVVLGALMIVKPFS), 147 to 167 (SVYAVVGLLSAVFAAGASVAI), 179 to 199 (IVFYFLAVATLVAIPLMWNDF), 209 to 229 (GLLLAIGVVSLLGQVFLTRAF), 236 to 256 (IVAVTRYIGIVFNAGWGWLFW), and 259 to 279 (VPDALTIAGGVLIVVACIALS). EamA domains lie at 8-138 (SGVL…LMIV) and 151-279 (VVGL…IALS).

The protein belongs to the EamA transporter family.

Its subcellular location is the cell inner membrane. Transports the metallophore pseudopaline, which is involved in the acquisition of nickel and zinc, and thus enables bacterial growth inside the host, where metal access is limited. Is probably involved in the export of pseudopaline. Essential for iron acquisition during the interaction with airway mucus secretions (AMS). In Pseudomonas aeruginosa (strain ATCC 15692 / DSM 22644 / CIP 104116 / JCM 14847 / LMG 12228 / 1C / PRS 101 / PAO1), this protein is Pseudopaline exporter CntI.